The following is a 265-amino-acid chain: 3-methyl-2-oxobutanoate hydroxymethyltransferase (265 aa).

Mg(2+)-binding residues include aspartate 43 and aspartate 82. Residues 43 to 44 (DS), aspartate 82, and lysine 111 each bind 3-methyl-2-oxobutanoate. Residue glutamate 113 participates in Mg(2+) binding. The Proton acceptor role is filled by glutamate 180.

The protein belongs to the PanB family. As to quaternary structure, homodecamer; pentamer of dimers. The cofactor is Mg(2+).

The protein localises to the cytoplasm. The enzyme catalyses 3-methyl-2-oxobutanoate + (6R)-5,10-methylene-5,6,7,8-tetrahydrofolate + H2O = 2-dehydropantoate + (6S)-5,6,7,8-tetrahydrofolate. It functions in the pathway cofactor biosynthesis; (R)-pantothenate biosynthesis; (R)-pantoate from 3-methyl-2-oxobutanoate: step 1/2. In terms of biological role, catalyzes the reversible reaction in which hydroxymethyl group from 5,10-methylenetetrahydrofolate is transferred onto alpha-ketoisovalerate to form ketopantoate. This Francisella tularensis subsp. novicida (strain U112) protein is 3-methyl-2-oxobutanoate hydroxymethyltransferase.